The chain runs to 101 residues: uncharacterized protein (101 aa).

This is an uncharacterized protein from Mycobacterium tuberculosis (strain CDC 1551 / Oshkosh).